We begin with the raw amino-acid sequence, 527 residues long: Bifunctional purine biosynthesis protein PurH (527 aa).

The MGS-like domain maps to 1–149 (MTADLLPVRR…KNFARVAVAT (149 aa)).

Belongs to the PurH family.

It catalyses the reaction (6R)-10-formyltetrahydrofolate + 5-amino-1-(5-phospho-beta-D-ribosyl)imidazole-4-carboxamide = 5-formamido-1-(5-phospho-D-ribosyl)imidazole-4-carboxamide + (6S)-5,6,7,8-tetrahydrofolate. The enzyme catalyses IMP + H2O = 5-formamido-1-(5-phospho-D-ribosyl)imidazole-4-carboxamide. The protein operates within purine metabolism; IMP biosynthesis via de novo pathway; 5-formamido-1-(5-phospho-D-ribosyl)imidazole-4-carboxamide from 5-amino-1-(5-phospho-D-ribosyl)imidazole-4-carboxamide (10-formyl THF route): step 1/1. It participates in purine metabolism; IMP biosynthesis via de novo pathway; IMP from 5-formamido-1-(5-phospho-D-ribosyl)imidazole-4-carboxamide: step 1/1. The chain is Bifunctional purine biosynthesis protein PurH from Stenotrophomonas maltophilia (strain R551-3).